We begin with the raw amino-acid sequence, 562 residues long: MANASQCLDDVPMGGRWPAAPPDQYNEAHRLAMEELVSGGPEAMRGFLKRERLPSFLSEPEMGEILGCASVLPCGDEENSMSASVDCSSVTYFPDRSDVEPPILELGWPAFTTGSYRGVTRVDVHFQPSFGDTIYTCKEAARELIRSAREVIALVMDNFTDNDIFRDIHEACRKRRVPVYILLDQTQVSHFLTMCYNLGVSIETEPHMRVRLLTGNHYYTRSGTKIIGKVREKFLLVDGVKVATGNYSFTWTDGKLNSSNMLVLSGQVVEKFDLQFRILYAQSNPIGAKLLSSIRSRAMCLDKLPCKLPASKKPTLSSLLRMDQAKLSSTPKRHFDEFGAKFNRDVVALDKAAEDEWLQSCDIISGLKEMQTVEVQTEPWEGKNNVRGVDVGIQTSVAAANAATQTSVLSRMASTQTVMVSRSITTQTTETSQCTTQTPAPTSSVARLSNSSNSSSSSFSSTSITSTGSNCSMKSSDFSGTAFYQPEYPLGNCFKKLTKDRQYHYSTIRSKLNHMVSILSNRNRMPNSYMANDAPCYGLQRREIMHGSLLNLRDGVRFYPNM.

A disordered region spans residues Ile424 to Cys471. Positions Thr425–Cys471 are enriched in low complexity.

It belongs to the FAM83 family.

The protein localises to the cytoplasm. The protein resides in the cytoskeleton. It localises to the spindle. It is found in the spindle pole. Functionally, may regulate cell proliferation, growth, migration and epithelial to mesenchymal transition. May also be important for proper chromosome congression and alignment during mitosis. This is Protein FAM83D-A from Xenopus laevis (African clawed frog).